The primary structure comprises 254 residues: Bacteriorhodopsin-I (254 aa).

Positions Met1 to Leu6 are excised as a propeptide. Gln7 is modified (pyrrolidone carboxylic acid). 7 consecutive transmembrane segments (helical) span residues Glu16–Ala36, Val51–Phe71, Tyr91–Ala111, Ile116–Thr136, Ala144–Phe164, Ile185–Ala205, and Glu212–Leu232. Residue Lys224 is modified to N6-(retinylidene)lysine.

It belongs to the archaeal/bacterial/fungal opsin family. Post-translationally, the covalent binding of retinal to the apoprotein, bacterioopsin, generates bacteriorhodopsin.

Its subcellular location is the cell membrane. Its function is as follows. Light-driven proton pump. This Haloquadratum walsbyi (strain DSM 16854 / JCM 12705 / C23) protein is Bacteriorhodopsin-I (bop1).